Reading from the N-terminus, the 435-residue chain is Ras association domain-containing protein 9 (435 aa).

Residues 1–22 are disordered; the sequence is MAPFGRNLLKTRHKNRSPTKDM. The Ras-associating domain maps to 25–119; sequence EEKEIVVWVC…MQFVLVKADA (95 aa). The stretch at 195-290 forms a coiled coil; the sequence is HTIHQQVKRM…DKLSAEIEKE (96 aa). Residues 380 to 435 form a disordered region; sequence NRAKESEVPSSNGEIPPFTQRVFSNYTNDTDSDTGISSNHSQDSETTVGDVVLLST. Polar residues predominate over residues 400–426; the sequence is RVFSNYTNDTDSDTGISSNHSQDSETT.

Interacts with PAM.

Its subcellular location is the endosome. In terms of biological role, may play a role in regulating vesicuar trafficking in cells. The polypeptide is Ras association domain-containing protein 9 (RASSF9) (Homo sapiens (Human)).